The chain runs to 337 residues: Protein ABHD13 (337 aa).

A helical; Signal-anchor for type II membrane protein membrane pass occupies residues 37 to 57; that stretch reads FHLYGGIVLLLLIFVSIAGIL. Active-site charge relay system residues include Ser193, Asp268, and His298. Asn299 carries an N-linked (GlcNAc...) asparagine glycan.

It belongs to the serine esterase family.

It is found in the membrane. This chain is Protein ABHD13, found in Mus musculus (Mouse).